A 198-amino-acid chain; its full sequence is MSIPRVGVLALQGDTREHLAALGEAGAEPMTVRRRSELDAVDGLVIPGGESTTISHLLCGFDLLEPLRARLAAGLPAYGACAGMIMLASEILDAGVRGRQALPLRGIDMTVRRNAFGRQVDSFEGDIAFTGLDHPVRAVFIRAPWVERVGAGVTVLARAGDHIVAVREGSVLATAFHPEVTGDRSIHRLFVDIVNGKA.

An L-glutamine-binding site is contributed by Gly49 to Ser51. The active-site Nucleophile is the Cys81. Residues Arg113 and Ile141 to Arg142 each bind L-glutamine. Catalysis depends on charge relay system residues His177 and Glu179.

Belongs to the glutaminase PdxT/SNO family. In the presence of PdxS, forms a dodecamer of heterodimers. Only shows activity in the heterodimer.

The enzyme catalyses aldehydo-D-ribose 5-phosphate + D-glyceraldehyde 3-phosphate + L-glutamine = pyridoxal 5'-phosphate + L-glutamate + phosphate + 3 H2O + H(+). It carries out the reaction L-glutamine + H2O = L-glutamate + NH4(+). Its pathway is cofactor biosynthesis; pyridoxal 5'-phosphate biosynthesis. Functionally, catalyzes the hydrolysis of glutamine to glutamate and ammonia as part of the biosynthesis of pyridoxal 5'-phosphate. The resulting ammonia molecule is channeled to the active site of PdxS. In Mycobacterium ulcerans (strain Agy99), this protein is Pyridoxal 5'-phosphate synthase subunit PdxT.